Consider the following 492-residue polypeptide: Malonate-semialdehyde dehydrogenase (492 aa).

6 residues coordinate NAD(+): F156, K180, E183, K184, S233, and T255. The active-site Nucleophile is C288. Position 387 (E387) interacts with NAD(+).

It belongs to the aldehyde dehydrogenase family. IolA subfamily. Homotetramer.

It catalyses the reaction 3-oxopropanoate + NAD(+) + CoA + H2O = hydrogencarbonate + acetyl-CoA + NADH + H(+). The enzyme catalyses 2-methyl-3-oxopropanoate + NAD(+) + CoA + H2O = propanoyl-CoA + hydrogencarbonate + NADH + H(+). It participates in polyol metabolism; myo-inositol degradation into acetyl-CoA; acetyl-CoA from myo-inositol: step 7/7. In terms of biological role, catalyzes the oxidation of malonate semialdehyde (MSA) and methylmalonate semialdehyde (MMSA) into acetyl-CoA and propanoyl-CoA, respectively. Is involved in a myo-inositol catabolic pathway. Bicarbonate, and not CO2, is the end-product of the enzymatic reaction. This is Malonate-semialdehyde dehydrogenase from Lacticaseibacillus casei (Lactobacillus casei).